Reading from the N-terminus, the 82-residue chain is Ferredoxin (82 aa).

Residues 3-31 form the 4Fe-4S ferredoxin-type domain; sequence KYTIVDKDTCIACGACGAAAPDIYDYDDE. [4Fe-4S] cluster is bound by residues Cys12, Cys15, Cys18, and Cys62.

[4Fe-4S] cluster serves as cofactor.

Its function is as follows. Ferredoxins are iron-sulfur proteins that transfer electrons in a wide variety of metabolic reactions. This ferredoxin may act as a phosphodonor to cytochrome P450 BioI. This Bacillus subtilis (strain 168) protein is Ferredoxin (fer).